We begin with the raw amino-acid sequence, 242 residues long: Derlin-1 (242 aa).

The Cytoplasmic portion of the chain corresponds to 1 to 20 (MSSPAEYYNSLPPISKAYGT). A helical membrane pass occupies residues 21–41 (LCFFATVLCQLQILNPPFLAL). Over 42 to 55 (YYPFVFKKFQIWRL) the chain is Lumenal. Residues 56–76 (FTSFFFLGKFSINFGIRLLMI) traverse the membrane as a helical segment. At 77 to 94 (ARYGVQLEKGAFEKRTAD) the chain is on the cytoplasmic side. The helical transmembrane segment at 95-115 (FLWMMIFGAISLLALSAIPFL) threads the bilayer. At 116 to 157 (DIYFLGVPMVSMLLYVWSREYPNSQISMYGLVQLRSFYLPWA) the chain is on the lumenal side. The chain crosses the membrane as a helical span at residues 158–178 (MLGLDVIFGSEILPGLLGILV). Over 179 to 242 (GHTYYFLSVL…FRGRSYRLSQ (64 aa)) the chain is Cytoplasmic.

Belongs to the derlin family. Seedling shoots and roots.

It localises to the endoplasmic reticulum membrane. Its function is as follows. May be involved in the degradation process of specific misfolded endoplasmic reticulum (ER) luminal proteins. This chain is Derlin-1 (DER1), found in Oryza sativa subsp. japonica (Rice).